A 90-amino-acid polypeptide reads, in one-letter code: Co-chaperonin GroES (90 aa).

The protein belongs to the GroES chaperonin family. Heptamer of 7 subunits arranged in a ring. Interacts with the chaperonin GroEL.

The protein localises to the cytoplasm. Functionally, together with the chaperonin GroEL, plays an essential role in assisting protein folding. The GroEL-GroES system forms a nano-cage that allows encapsulation of the non-native substrate proteins and provides a physical environment optimized to promote and accelerate protein folding. GroES binds to the apical surface of the GroEL ring, thereby capping the opening of the GroEL channel. The chain is Co-chaperonin GroES from Fusobacterium nucleatum subsp. nucleatum (strain ATCC 25586 / DSM 15643 / BCRC 10681 / CIP 101130 / JCM 8532 / KCTC 2640 / LMG 13131 / VPI 4355).